A 262-amino-acid chain; its full sequence is Probable cutinase 1 (262 aa).

The signal sequence occupies residues 1-19 (MAPLKSLLLGASLATLALS). 2 disulfides stabilise this stretch: C48-C127 and C74-C88. The Nucleophile role is filled by S138. C189 and C196 are oxidised to a cystine. The active site involves D193. The active-site Proton donor/acceptor is H206. The segment at 228–262 (SSSTTSSSSDAASSSSAAGTSSSGLSGLSSFFGGL) is disordered.

This sequence belongs to the cutinase family.

It localises to the secreted. It carries out the reaction cutin + H2O = cutin monomers.. In terms of biological role, catalyzes the hydrolysis of complex carboxylic polyesters found in the cell wall of plants. Degrades cutin, a macromolecule that forms the structure of the plant cuticle. This is Probable cutinase 1 from Aspergillus niger (strain ATCC MYA-4892 / CBS 513.88 / FGSC A1513).